The following is a 444-amino-acid chain: Baeyer-Villiger oxidase ptaJ (444 aa).

The protein belongs to the questin oxidase family. It depends on NADPH as a cofactor.

The protein operates within secondary metabolite biosynthesis. Its function is as follows. Baeyer-Villiger oxidase; part of the gene cluster that mediates the biosynthesis of pestheic acid, a diphenyl ether which is a biosynthetic precursor of the unique chloropupukeananes. The biosynthesis initiates from condensation of acetate and malonate units catalyzed by the non-reducing PKS ptaA. As the ptaA protein is TE/CLC domain-deficient, hydrolysis and Claisen cyclization of the polyketide could be catalyzed by ptaB containing a beta-lactamase domain. The ptaB protein might hydrolyze the thioester bond between the ACP of ptaA and the intermediate to release atrochrysone carboxylic acid, which is spontaneously dehydrated to form endocrocin anthrone. Endocrocin anthrone is then converted to endocrocin, catalyzed by the anthrone oxygenase ptaC. Spontaneous decarboxylation of endocrocin occurs to generate emodin. An O-methyltransferase (ptaH or ptaI) could methylate emodin to form physcion. PtaJ could then catalyze the oxidative cleavage of physcion, and rotation of the intermediate could then afford desmethylisosulochrin. PtaF, a putative NADH-dependent oxidoreductase, might also participate in the oxidative cleavage step. Desmethylisosulochrin is then transformed by another O-methyltransferase (ptaH or ptaI) to form isosulochrin. Chlorination of isosulochrin by ptaM in the cyclohexadienone B ring then produces chloroisosulochrin. PtaE is responsible for the oxidative coupling reactions of both benzophenones isosulouchrin and chloroisosulouchrin to RES-1214-1 and pestheic acid respectively, regardless of chlorination. The protein is Baeyer-Villiger oxidase ptaJ of Pestalotiopsis fici (strain W106-1 / CGMCC3.15140).